Reading from the N-terminus, the 359-residue chain is Peptide chain release factor 1 (359 aa).

At Gln-235 the chain carries N5-methylglutamine.

Belongs to the prokaryotic/mitochondrial release factor family. Methylated by PrmC. Methylation increases the termination efficiency of RF1.

The protein resides in the cytoplasm. Its function is as follows. Peptide chain release factor 1 directs the termination of translation in response to the peptide chain termination codons UAG and UAA. This is Peptide chain release factor 1 from Polynucleobacter asymbioticus (strain DSM 18221 / CIP 109841 / QLW-P1DMWA-1) (Polynucleobacter necessarius subsp. asymbioticus).